Reading from the N-terminus, the 171-residue chain is Translationally-controlled tumor protein homolog (171 aa).

Positions 1-171 constitute a TCTP domain; that stretch reads MKIWKDVFTG…FKHGLEEEKF (171 aa).

Belongs to the TCTP family.

It is found in the cytoplasm. Functionally, involved in calcium binding and microtubule stabilization. The polypeptide is Translationally-controlled tumor protein homolog (Anopheles gambiae (African malaria mosquito)).